Here is a 365-residue protein sequence, read N- to C-terminus: MKRQLILEDGTVLIGTGFGGEIEKSGEVVFTTGMTGYQETLSDPSYCGQIVTFTYPLIGNYGINRDDFESIHPSVNGLIVNEICDHPSNFRNEISLNDYLKERNIPGLAGIDTRKLTRKIRQYGTLRGRLCNMDADVEYIVSQLKATVFTDHVKRVSTKDPYPSPGRGHRVVLVDFGMKHGILRELNKRDCDVIVVPYNTTAEEILRLSPDGIMLSNGPGDPKDVPEAIEMLKDIIGKVPLFGICLGHQLFALASGANTSKLKFGHRGLNHPVKNIATGKVAITSQNHGYAVEEESVENTELEITHVALNDGTVEGLRHKKFPAFTVQYHPEASAGPEDANDLFEDFLTMIENFKKEGEELCQNA.

2 CPSase regions span residues 1–166 (MKRQ…PSPG) and 1–169 (MKRQ…GRGH). L-glutamine contacts are provided by Ser45, Gly218, and Gly220. The 188-residue stretch at 170-357 (RVVLVDFGMK…LTMIENFKKE (188 aa)) folds into the Glutamine amidotransferase type-1 domain. Cys245 functions as the Nucleophile in the catalytic mechanism. L-glutamine-binding residues include Leu246, Gln249, Asn287, Gly289, and Tyr290. Residues His330 and Glu332 contribute to the active site.

The protein belongs to the CarA family. As to quaternary structure, composed of two chains; the small (or glutamine) chain promotes the hydrolysis of glutamine to ammonia, which is used by the large (or ammonia) chain to synthesize carbamoyl phosphate. Tetramer of heterodimers (alpha,beta)4.

It carries out the reaction hydrogencarbonate + L-glutamine + 2 ATP + H2O = carbamoyl phosphate + L-glutamate + 2 ADP + phosphate + 2 H(+). The enzyme catalyses L-glutamine + H2O = L-glutamate + NH4(+). Its pathway is amino-acid biosynthesis; L-arginine biosynthesis; carbamoyl phosphate from bicarbonate: step 1/1. The protein operates within pyrimidine metabolism; UMP biosynthesis via de novo pathway; (S)-dihydroorotate from bicarbonate: step 1/3. Small subunit of the glutamine-dependent carbamoyl phosphate synthetase (CPSase). CPSase catalyzes the formation of carbamoyl phosphate from the ammonia moiety of glutamine, carbonate, and phosphate donated by ATP, constituting the first step of 2 biosynthetic pathways, one leading to arginine and/or urea and the other to pyrimidine nucleotides. The small subunit (glutamine amidotransferase) binds and cleaves glutamine to supply the large subunit with the substrate ammonia. This chain is Carbamoyl phosphate synthase small chain, found in Bacillus anthracis.